The sequence spans 204 residues: Small ribosomal subunit protein uS4 (204 aa).

Positions 1 to 49 (MSKRKSAKYKLDRRMGENIWGRPNSPVNKRSYGPGQHGQRRKGKTSDFG) are disordered. The S4 RNA-binding domain maps to 94–154 (QRLDMVVYRA…NKAKEMALVI (61 aa)).

It belongs to the universal ribosomal protein uS4 family. In terms of assembly, part of the 30S ribosomal subunit. Contacts protein S5. The interaction surface between S4 and S5 is involved in control of translational fidelity.

Its function is as follows. One of the primary rRNA binding proteins, it binds directly to 16S rRNA where it nucleates assembly of the body of the 30S subunit. With S5 and S12 plays an important role in translational accuracy. This Erythrobacter litoralis (strain HTCC2594) protein is Small ribosomal subunit protein uS4.